Reading from the N-terminus, the 315-residue chain is Putative olfactory receptor 2I1 (315 aa).

The Extracellular portion of the chain corresponds to 1–24 (MKANYSAEERFLLLGFSDWPSLQP). Residues 25 to 48 (VLFALVLLCYLLTLTGNSALVLLA) traverse the membrane as a helical segment. The Cytoplasmic portion of the chain corresponds to 49–56 (VRDPRLHT). The chain crosses the membrane as a helical span at residues 57-78 (PMYYFLCHLALVDAGFTTSVVP). The Extracellular segment spans residues 79-99 (PLLANLRGPALWLPRSHCTAQ). Cysteines 96 and 188 form a disulfide. Residues 100 to 119 (LCASLALGSAECVLLAVMAL) form a helical membrane-spanning segment. The Cytoplasmic portion of the chain corresponds to 120-138 (DRAAAVCRPLRYAGLVSPR). The chain crosses the membrane as a helical span at residues 139–157 (LCRTLASASWLSGLTNSVA). The Extracellular portion of the chain corresponds to 158–195 (QTALLAERPLCAPRLLDHFICELPALLKLACGGDGDTT). A helical transmembrane segment spans residues 196–219 (ENQMFAARVVILLLPFAVILASYG). The Cytoplasmic portion of the chain corresponds to 220–236 (AVARAVCCMRFSGGRRR). A helical transmembrane segment spans residues 237 to 259 (AVGTCGSHLTAVCLFYGSAIYTY). Residues 260–272 (LQPAQRYNQARGK) are Extracellular-facing. A helical membrane pass occupies residues 273 to 292 (FVSLFYTVVTPALNPLIYTL). Residues 293 to 315 (RNKKVKGAARRLLRSLGRGQAGQ) lie on the Cytoplasmic side of the membrane.

This sequence belongs to the G-protein coupled receptor 1 family.

Its subcellular location is the cell membrane. Its function is as follows. Odorant receptor. The sequence is that of Putative olfactory receptor 2I1 from Homo sapiens (Human).